The primary structure comprises 887 residues: Lateral signaling target protein 2 homolog (887 aa).

A Glycyl lysine isopeptide (Lys-Gly) (interchain with G-Cter in ubiquitin) cross-link involves residue Lys-87. A disordered region spans residues 308–327 (PALSAPLPPEGPLSAKAKDP). Ser-334 bears the Phosphoserine mark. Disordered stretches follow at residues 354–396 (DEMS…GSDE) and 412–474 (ALAR…ASLA). A Phosphothreonine modification is found at Thr-516. Ser-586 bears the Phosphoserine; by MAP2K mark. The tract at residues 599-714 (LAKASDRAPE…THAAPQATRE (116 aa)) is disordered. A compositionally biased stretch (basic and acidic residues) spans 602 to 612 (ASDRAPERQEE). Positions 638 to 648 (TSGSQVDTASG) are enriched in polar residues. Composition is skewed to low complexity over residues 681–693 (SGSS…SCSS) and 700–711 (AAPAATHAAPQA). Residues 817-879 (DEACGFCTAC…THCYMFHVTP (63 aa)) form an FYVE-type zinc finger. Cys-823, Cys-826, Cys-839, Cys-842, Cys-847, Cys-850, and Cys-869 together coordinate Zn(2+). A Phosphothreonine; by MAP2K modification is found at Thr-870. Residue Cys-872 coordinates Zn(2+).

The protein belongs to the lst-2 family. Interacts with TRIM3. Monoubiquitination at Lys-87 prevents binding to phosphatidylinositol 3-phosphate (PI3P) and localization to early endosome membranes.

The protein localises to the cytoplasm. Its subcellular location is the cytosol. The protein resides in the early endosome membrane. Its function is as follows. Negative regulator of epidermal growth factor receptor (EGFR) signaling. Acts by promoting EGFR degradation in endosomes when not monoubiquitinated. This Homo sapiens (Human) protein is Lateral signaling target protein 2 homolog (ZFYVE28).